The chain runs to 107 residues: UPF0060 membrane protein RPD_3084 (107 aa).

Helical transmembrane passes span Ile-5–Leu-25, Val-31–Val-51, Ala-59–Glu-79, and Arg-85–Pro-105.

It belongs to the UPF0060 family.

It localises to the cell inner membrane. In Rhodopseudomonas palustris (strain BisB5), this protein is UPF0060 membrane protein RPD_3084.